The following is a 624-amino-acid chain: Bifunctional 3'-phosphoadenosine 5'-phosphosulfate synthase 1 (624 aa).

N-acetylmethionine is present on methionine 1. Residues 1–225 (MEIPGSLCKK…VVELLQERDI (225 aa)) are adenylyl-sulfate kinase. Residue lysine 12 is modified to N6-acetyllysine. 62–67 (GAGKTT) lines the ATP pocket. Adenosine 5'-phosphosulfate-binding positions include 89-92 (DNIR), phenylalanine 101, 106-109 (REEN), 132-133 (IS), lysine 171, and 184-185 (GF). Residues cysteine 207, cysteine 212, 419–422 (QLRN), 521–525 (GRDPA), and alanine 563 contribute to the ATP site. Residues 234-624 (VKELYVPENK…TEYYKSLEKA (391 aa)) are sulfate adenylyltransferase.

The protein in the N-terminal section; belongs to the APS kinase family. This sequence in the C-terminal section; belongs to the sulfate adenylyltransferase family. In terms of assembly, homodimer. As to expression, expressed in testis, pancreas, kidney, thymus, prostate, ovary, small intestine, colon, leukocytes and liver. Also expressed in high endothelial venules (HEV) cells and in cartilage.

It carries out the reaction sulfate + ATP + H(+) = adenosine 5'-phosphosulfate + diphosphate. The catalysed reaction is adenosine 5'-phosphosulfate + ATP = 3'-phosphoadenylyl sulfate + ADP + H(+). It functions in the pathway sulfur metabolism; sulfate assimilation. Inhibited by chlorate. The kinase activity is subject to inhibition by the substrate adenylyl sulfate. Bifunctional enzyme with both ATP sulfurylase and APS kinase activity, which mediates two steps in the sulfate activation pathway. The first step is the transfer of a sulfate group to ATP to yield adenosine 5'-phosphosulfate (APS), and the second step is the transfer of a phosphate group from ATP to APS yielding 3'-phosphoadenylylsulfate (PAPS: activated sulfate donor used by sulfotransferase). In mammals, PAPS is the sole source of sulfate; APS appears to be only an intermediate in the sulfate-activation pathway. Required for normal biosynthesis of sulfated L-selectin ligands in endothelial cells. This chain is Bifunctional 3'-phosphoadenosine 5'-phosphosulfate synthase 1 (PAPSS1), found in Homo sapiens (Human).